The following is a 434-amino-acid chain: Putative DD-carboxypeptidase TP_0574 (434 aa).

Positions 1-19 are cleaved as a signal peptide; sequence MKVKYALLSAGALQLLVVG. C20 carries the N-palmitoyl cysteine lipid modification. C20 carries S-diacylglycerol cysteine lipidation.

Probably a monomer; a non-lipidated construct (residues 22-434) is monomeric in solution but crystallizes as a homodimer. Requires Zn(2+) as cofactor. In terms of processing, the N-terminus is blocked. Present as a doublet of low abundance 48 kDa and high abundance 47 kDa proteins. The longer form is probably due to readthrough of the stop codon; the extra amino acids at the C-terminus would be X-Lys-Arg-Gly-Val-Leu-Ser-Arg-Val-Ser, a peptide antibody against this sequence detects only the 48 kDa form.

The protein localises to the cell inner membrane. Its function is as follows. A possible D,D-carboxypeptidase, that releases amino acids sequentially from a proteins C-terminus. Has zinc-dependent carboxypeptidase activity on synthetic depsipeptide substrates. May serve to decrease cross-linking of peptidoglycan, promoting the highly sinusous motility of this spirochaete. Overexpression of the whole protein in E.coli leads to aberrant cell morphology and extrusion of the cytoplasm, while overexpression of a construct with the first 62 resides of the protein fused to PhoA does have this effect, suggesting the whole protein, not the lipoprotein moiety, is toxic. Binds penicillin. Penicillin binding is covalent, does not require lipidation, and is zinc-dependent. While this protein has beta-lactamase activity in vitro, that is probably not its role in vivo, as T.pallidum is very sensitive to penicillin antibiotics. In terms of biological role, a pathogen-specific membrane antigen. Most abundant of the membrane lipoproteins, only found in pathogenic treponemes, suggesting that it is an important structural moiety in the cell envelope of virulent treponemal subspecies. A lipopeptide corresponding to the first 6 mature residues induces host (human and mouse) cytokine release by monocyte cell lines via TLR2 and CD14; nonlipidated protein does not stimulate host cells. Stimulates host (human) dendritic cell maturation to become MHC class II-positive antigen presenting cells via TLR2, which depends on lipidation; nonlipidated protein does not stimulate maturation. In Treponema pallidum (strain Nichols), this protein is Putative DD-carboxypeptidase TP_0574.